The sequence spans 417 residues: Gamma-glutamyl phosphate reductase (417 aa).

This sequence belongs to the gamma-glutamyl phosphate reductase family.

Its subcellular location is the cytoplasm. The catalysed reaction is L-glutamate 5-semialdehyde + phosphate + NADP(+) = L-glutamyl 5-phosphate + NADPH + H(+). The protein operates within amino-acid biosynthesis; L-proline biosynthesis; L-glutamate 5-semialdehyde from L-glutamate: step 2/2. Its function is as follows. Catalyzes the NADPH-dependent reduction of L-glutamate 5-phosphate into L-glutamate 5-semialdehyde and phosphate. The product spontaneously undergoes cyclization to form 1-pyrroline-5-carboxylate. The protein is Gamma-glutamyl phosphate reductase of Phocaeicola vulgatus (strain ATCC 8482 / DSM 1447 / JCM 5826 / CCUG 4940 / NBRC 14291 / NCTC 11154) (Bacteroides vulgatus).